Reading from the N-terminus, the 429-residue chain is Cytochrome P450 BJ-3 (429 aa).

Cys-376 contacts heme.

This sequence belongs to the cytochrome P450 family. Heme serves as cofactor.

In terms of biological role, cytochromes P450 are a group of heme-thiolate monooxygenases. They oxidize a variety of structurally unrelated compounds, including steroids, fatty acids, and xenobiotics. This is Cytochrome P450 BJ-3 (cyp114) from Bradyrhizobium diazoefficiens (strain JCM 10833 / BCRC 13528 / IAM 13628 / NBRC 14792 / USDA 110).